Here is a 278-residue protein sequence, read N- to C-terminus: uncharacterized protein (278 aa).

Residues 1–32 (MSSASFTTKALSVLAALTAASAPLVAASPAHA) form the signal peptide. Residues 33-236 (LANARNVTGS…HAEWIAYYTG (204 aa)) enclose the Peptidase S1 domain. A disulfide bond links Cys-59 and Cys-75. Catalysis depends on charge relay system residues His-74, Asp-123, and Ser-189.

This sequence belongs to the peptidase S1 family.

Its subcellular location is the secreted. This is an uncharacterized protein from Corynebacterium glutamicum (strain R).